The chain runs to 216 residues: Protein-L-isoaspartate O-methyltransferase (216 aa).

Ser61 is a catalytic residue.

The protein belongs to the methyltransferase superfamily. L-isoaspartyl/D-aspartyl protein methyltransferase family.

Its subcellular location is the cytoplasm. The catalysed reaction is [protein]-L-isoaspartate + S-adenosyl-L-methionine = [protein]-L-isoaspartate alpha-methyl ester + S-adenosyl-L-homocysteine. In terms of biological role, catalyzes the methyl esterification of L-isoaspartyl residues in peptides and proteins that result from spontaneous decomposition of normal L-aspartyl and L-asparaginyl residues. It plays a role in the repair and/or degradation of damaged proteins. The chain is Protein-L-isoaspartate O-methyltransferase (pcm) from Pyrococcus abyssi (strain GE5 / Orsay).